Consider the following 199-residue polypeptide: Nucleoid occlusion factor SlmA (199 aa).

Residues 10-71 (RNRREEILQA…SLIEFIEDSL (62 aa)) form the HTH tetR-type domain. A DNA-binding region (H-T-H motif) is located at residues 34-53 (TTAKLAANVGVSEAALYRHF). The stretch at 120-140 (NRLQGRINQLFERIEVQIRQV) forms a coiled coil.

The protein belongs to the nucleoid occlusion factor SlmA family. Homodimer. Interacts with FtsZ.

The protein resides in the cytoplasm. It localises to the nucleoid. In terms of biological role, required for nucleoid occlusion (NO) phenomenon, which prevents Z-ring formation and cell division over the nucleoid. Acts as a DNA-associated cell division inhibitor that binds simultaneously chromosomal DNA and FtsZ, and disrupts the assembly of FtsZ polymers. SlmA-DNA-binding sequences (SBS) are dispersed on non-Ter regions of the chromosome, preventing FtsZ polymerization at these regions. The sequence is that of Nucleoid occlusion factor SlmA from Photorhabdus laumondii subsp. laumondii (strain DSM 15139 / CIP 105565 / TT01) (Photorhabdus luminescens subsp. laumondii).